Consider the following 512-residue polypeptide: Rab11 family-interacting protein 2 (512 aa).

The region spanning 1–120 (MMLSEQAQKW…DKQRRKTEWF (120 aa)) is the C2 domain. Residues 15-102 (VQVTVLQAKD…GLDKFLGQVA (88 aa)) are necessary for its cellular translocation to the plasma membrane. Disordered regions lie at residues 174–231 (RKSD…MSDL) and 263–287 (PESG…NQPG). Polar residues-rich tracts occupy residues 221–231 (RLSSAHSMSDL) and 277–287 (SFDTSKLNQPG). Ser-227 carries the post-translational modification Phosphoserine; by MARK2. Ser-277 is modified (phosphoserine). Positions 323–325 (NPF) match the NPF 1 motif. Residues 347-374 (KESKREKREKVSLFERVTGKRDSRRPDK) are compositionally biased toward basic and acidic residues. The segment at 347–390 (KESKREKREKVSLFERVTGKRDSRRPDKLNNGGSDSPCDLKSPS) is disordered. 2 consecutive short sequence motifs (NPF) follow at residues 406-408 (NPF) and 440-442 (NPF). The FIP-RBD domain occupies 437-499 (PDNNPFDATA…EETPSILRVP (63 aa)). The segment at 465–512 (ELLRRKDTHIRELEDYIDNLLVRVMEETPSILRVPYEPSRKAGKFTNS) is necessary for interaction with AP2A1, RAB11A, subcellular location, endocytosis activity and homooligomerization.

As to quaternary structure, homooligomerizes in a Rab11-independent manner. Forms a heterooligomeric complex with RAB11FIP4. Interacts with AP2A1, MYO5B, RAB25 and REPS1. Interacts with RAB11A and RAB11B (activated GTP-bound form). Interacts with NPC1L1. Interacts (via NPF motifs) with EHD1 and EHD3. Interacts with TICAM2; this interaction directs RAB11FIP2 to the phagosome. Interacts with RAB14 and RAB25 (GTP-bound forms). In terms of processing, phosphorylation at Ser-227 by MARK2 regulates epithelial cell polarity.

The protein resides in the cell membrane. Its subcellular location is the recycling endosome membrane. A Rab11 effector binding preferentially phosphatidylinositol 3,4,5-trisphosphate (PtdInsP3) and phosphatidic acid (PA) and acting in the regulation of the transport of vesicles from the endosomal recycling compartment (ERC) to the plasma membrane. Involved in insulin granule exocytosis. Also involved in receptor-mediated endocytosis and membrane trafficking of recycling endosomes, probably originating from clathrin-coated vesicles. Required in a complex with MYO5B and RAB11 for the transport of NPC1L1 to the plasma membrane. Also acts as a regulator of cell polarity. Plays an essential role in phagocytosis through a mechanism involving TICAM2, RAC1 and CDC42 Rho GTPases for controlling actin-dynamics. The polypeptide is Rab11 family-interacting protein 2 (Rab11fip2) (Mus musculus (Mouse)).